The sequence spans 846 residues: Rho GTPase-activating protein 12 (846 aa).

The 63-residue stretch at proline 12–arginine 74 folds into the SH3 domain. The segment covering leucine 152–arginine 175 has biased composition (polar residues). The segment at leucine 152 to proline 241 is disordered. Residues serine 165 and serine 176 each carry the phosphoserine modification. Over residues threonine 191–aspartate 200 the composition is skewed to polar residues. Serine 201, serine 213, and serine 215 each carry phosphoserine. Residues threonine 224–asparagine 234 show a composition bias toward polar residues. Phosphothreonine occurs at positions 230 and 231. Residue serine 240 is modified to Phosphoserine. The residue at position 243 (tyrosine 243) is a Phosphotyrosine. 2 consecutive WW domains span residues isoleucine 265–tryptophan 298 and aspartate 358–tyrosine 391. Residues tryptophan 293–glutamate 316 are disordered. Disordered regions lie at residues aspartate 428–lysine 466 and glutamate 580–asparagine 629. The span at asparagine 445–proline 461 shows a compositional bias: polar residues. The region spanning aspartate 463–asparagine 575 is the PH domain. Residues glutamate 580 to proline 590 are compositionally biased toward acidic residues. At serine 592 the chain carries Phosphoserine. A compositionally biased stretch (basic and acidic residues) spans glycine 594–lysine 609. The Rho-GAP domain occupies serine 656–phenylalanine 844.

In terms of biological role, GTPase activator for the Rho-type GTPases by converting them to an inactive GDP-bound state. The chain is Rho GTPase-activating protein 12 (ARHGAP12) from Homo sapiens (Human).